The primary structure comprises 153 residues: Ribosomal RNA large subunit methyltransferase H (153 aa).

S-adenosyl-L-methionine contacts are provided by residues L75, G102, and 121-126 (LSKLTL).

It belongs to the RNA methyltransferase RlmH family. In terms of assembly, homodimer.

Its subcellular location is the cytoplasm. The enzyme catalyses pseudouridine(1915) in 23S rRNA + S-adenosyl-L-methionine = N(3)-methylpseudouridine(1915) in 23S rRNA + S-adenosyl-L-homocysteine + H(+). Functionally, specifically methylates the pseudouridine at position 1915 (m3Psi1915) in 23S rRNA. This chain is Ribosomal RNA large subunit methyltransferase H, found in Campylobacter jejuni (strain RM1221).